We begin with the raw amino-acid sequence, 129 residues long: Glycophorin-A (129 aa).

The N-terminal stretch at 1 to 17 (MYEKIVIVLLLSGYIST) is a signal peptide. A Pyrrolidone carboxylic acid modification is found at glutamine 18. The Extracellular segment spans residues 18–82 (QDVTEIIPHE…QLVHIFSEPV (65 aa)). O-linked (GalNAc...) serine glycans are attached at residues serine 29 and serine 30. An O-linked (GalNAc...) threonine glycan is attached at threonine 34. Serine 40 carries O-linked (GalNAc...) serine glycosylation. O-linked (GalNAc...) threonine glycosylation is found at threonine 41 and threonine 48. Residue serine 56 is glycosylated (O-linked (GalNAc...) serine). A helical transmembrane segment spans residues 83–103 (IIGIIYAVMLGIIITILSIAF). The Cytoplasmic segment spans residues 104-129 (CIGQLTKKSSLPAQVASPEDVDPEVL).

It belongs to the glycophorin-A family. Homodimer. Component of the ankyrin-1 complex in the erythrocyte, composed of ANK1, RHCE, RHAG, SLC4A1, EPB42, GYPA, GYPB and AQP1. Interacts with SLC4A1; a GYPA monomer is bound at each end of the SLC4A1 dimer forming a heterotetramer.

It is found in the membrane. Its function is as follows. Component of the ankyrin-1 complex, a multiprotein complex involved in the stability and shape of the erythrocyte membrane. Glycophorin A is the major intrinsic membrane protein of the erythrocyte. The N-terminal glycosylated segment, which lies outside the erythrocyte membrane, has MN blood group receptors. Appears to be important for the function of SLC4A1 and is required for high activity of SLC4A1. May be involved in translocation of SLC4A1 to the plasma membrane. The sequence is that of Glycophorin-A from Canis lupus familiaris (Dog).